The chain runs to 124 residues: Small ribosomal subunit protein uS12 (124 aa).

The tract at residues 1 to 30 is disordered; it reads MPTIQQLVRKGRQDKVAKTKTAALKGSPQR. The residue at position 89 (aspartate 89) is a 3-methylthioaspartic acid. The tract at residues 102–124 is disordered; it reads ADTQGVKNRKQARSRYGAKKEKS. Positions 108–118 are enriched in basic residues; it reads KNRKQARSRYG.

Belongs to the universal ribosomal protein uS12 family. In terms of assembly, part of the 30S ribosomal subunit. Contacts proteins S8 and S17. May interact with IF1 in the 30S initiation complex.

In terms of biological role, with S4 and S5 plays an important role in translational accuracy. Functionally, interacts with and stabilizes bases of the 16S rRNA that are involved in tRNA selection in the A site and with the mRNA backbone. Located at the interface of the 30S and 50S subunits, it traverses the body of the 30S subunit contacting proteins on the other side and probably holding the rRNA structure together. The combined cluster of proteins S8, S12 and S17 appears to hold together the shoulder and platform of the 30S subunit. The sequence is that of Small ribosomal subunit protein uS12 from Saccharopolyspora erythraea (strain ATCC 11635 / DSM 40517 / JCM 4748 / NBRC 13426 / NCIMB 8594 / NRRL 2338).